A 473-amino-acid polypeptide reads, in one-letter code: GTPase Der (473 aa).

2 EngA-type G domains span residues 3–167 (FKVA…KGLE) and 203–378 (LRVA…TFWN). Residues 9–16 (GRPNVGKS), 56–60 (DTAGL), 119–122 (NKCE), 209–216 (GRPNVGKS), 256–260 (DTAGM), and 321–324 (NKWD) contribute to the GTP site. A KH-like domain is found at 379–463 (ARVPTARLNR…PIRLFMRKTH (85 aa)).

It belongs to the TRAFAC class TrmE-Era-EngA-EngB-Septin-like GTPase superfamily. EngA (Der) GTPase family. Associates with the 50S ribosomal subunit.

Its function is as follows. GTPase that plays an essential role in the late steps of ribosome biogenesis. The chain is GTPase Der from Parvibaculum lavamentivorans (strain DS-1 / DSM 13023 / NCIMB 13966).